A 418-amino-acid chain; its full sequence is Endoglucanase EG-II (418 aa).

Positions 1-21 (MNKSVAPLLLAASILYGGAAA) are cleaved as a signal peptide. Gln22 bears the Pyrrolidone carboxylic acid mark. Residues 22–57 (QQTVWGQCGGIGWSGPTNCAPGSACSTLNPYYAQCI) enclose the CBM1 domain. A linker region spans residues 58–91 (PGATTITTSTRPPSGPTTTTRATSTSSSTPPTSS). Residues 63–91 (ITTSTRPPSGPTTTTRATSTSSSTPPTSS) form a disordered region. Residues 92 to 418 (GVRFAGVNIA…SLVSSCLARK (327 aa)) are catalytic. Cys107 and Cys113 are disulfide-bonded. Asn124 carries N-linked (GlcNAc) asparagine glycosylation. Cys183 and Cys190 are oxidised to a cystine. The active-site Proton donor/acceptor is Glu239. Disulfide bonds link Cys323–Cys359 and Cys364–Cys414. Catalysis depends on Glu350, which acts as the Nucleophile.

Belongs to the glycosyl hydrolase 5 (cellulase A) family.

The protein resides in the secreted. The catalysed reaction is Endohydrolysis of (1-&gt;4)-beta-D-glucosidic linkages in cellulose, lichenin and cereal beta-D-glucans.. Its function is as follows. Endoglucanase (EG) that cleaves the internal beta-1,4-glucosidic bonds in cellulose. The degradation of cellulose involves an interplay between different cellulolytic enzymes. Hydrolysis starts with EGs, which cut internal glycosidic linkages to reduce the polymerization degree of the substrate and creates new chain ends for exocellobiohydrolases (CBHs). The CBH release the disaccharide cellobiose from the non-reducing end of the cellulose polymer chain. Finally, beta-1,4-glucosidases hydrolyze the cellobiose and other short cello-oligosaccharides into glucose units. In Hypocrea jecorina (strain ATCC 56765 / BCRC 32924 / NRRL 11460 / Rut C-30) (Trichoderma reesei), this protein is Endoglucanase EG-II (egl2).